The sequence spans 754 residues: 5-methyltetrahydropteroyltriglutamate--homocysteine methyltransferase (754 aa).

5-methyltetrahydropteroyltri-L-glutamate contacts are provided by residues 17–20 (RELK) and lysine 117. Residues 431–433 (IGS) and glutamate 484 contribute to the L-homocysteine site. L-methionine contacts are provided by residues 431 to 433 (IGS) and glutamate 484. 5-methyltetrahydropteroyltri-L-glutamate is bound by residues 515-516 (RC) and tryptophan 561. Aspartate 599 lines the L-homocysteine pocket. L-methionine is bound at residue aspartate 599. A 5-methyltetrahydropteroyltri-L-glutamate-binding site is contributed by glutamate 605. Histidine 641, cysteine 643, and glutamate 665 together coordinate Zn(2+). Catalysis depends on histidine 694, which acts as the Proton donor. Cysteine 726 is a Zn(2+) binding site.

The protein belongs to the vitamin-B12 independent methionine synthase family. Zn(2+) is required as a cofactor.

The catalysed reaction is 5-methyltetrahydropteroyltri-L-glutamate + L-homocysteine = tetrahydropteroyltri-L-glutamate + L-methionine. Its pathway is amino-acid biosynthesis; L-methionine biosynthesis via de novo pathway; L-methionine from L-homocysteine (MetE route): step 1/1. In terms of biological role, catalyzes the transfer of a methyl group from 5-methyltetrahydrofolate to homocysteine resulting in methionine formation. This Salmonella typhi protein is 5-methyltetrahydropteroyltriglutamate--homocysteine methyltransferase.